A 64-amino-acid polypeptide reads, in one-letter code: Large ribosomal subunit protein bL32 (64 aa).

Residues 1 to 16 are compositionally biased toward basic residues; the sequence is MAVPKHRKSKAKKRSR. The segment at 1–22 is disordered; sequence MAVPKHRKSKAKKRSRQAANDK.

The protein belongs to the bacterial ribosomal protein bL32 family.

This is Large ribosomal subunit protein bL32 from Brachyspira hyodysenteriae (strain ATCC 49526 / WA1).